Consider the following 446-residue polypeptide: Dihydroorotate dehydrogenase (quinone), mitochondrial (446 aa).

The transit peptide at 1-13 (MHSRPLPTLGRHA) directs the protein to the mitochondrion. A helical transmembrane segment spans residues 40–57 (AILYTAGILGGAFAGYYL). FMN-binding positions include 125–129 (AGLDK) and Ser-149. Lys-129 contacts substrate. Substrate is bound at residue 174–178 (NRYGF). FMN contacts are provided by Asn-222 and Asn-252. Substrate is bound by residues Asn-252 and 252 to 257 (NVSSPN). The active-site Nucleophile is the Ser-255. Residues Lys-303 and Ser-331 each contribute to the FMN site. Position 332-333 (332-333 (NT)) interacts with substrate. Residues Gly-357, Gly-387, and 408 to 409 (YT) each bind FMN.

Belongs to the dihydroorotate dehydrogenase family. Type 2 subfamily. The cofactor is FMN.

Its subcellular location is the mitochondrion inner membrane. It carries out the reaction (S)-dihydroorotate + a quinone = orotate + a quinol. It participates in pyrimidine metabolism; UMP biosynthesis via de novo pathway; orotate from (S)-dihydroorotate (quinone route): step 1/1. With respect to regulation, the activity is dependent of the presence of oxygen. Functionally, catalyzes the conversion of dihydroorotate to orotate with quinone as electron acceptor. This chain is Dihydroorotate dehydrogenase (quinone), mitochondrial (URA9), found in Lachancea kluyveri (strain ATCC 58438 / CBS 3082 / BCRC 21498 / NBRC 1685 / JCM 7257 / NCYC 543 / NRRL Y-12651) (Yeast).